The chain runs to 736 residues: Oligopeptide transporter 6 (736 aa).

The next 15 helical transmembrane spans lie at 43–63, 66–86, 116–136, 148–168, 210–230, 258–278, 288–308, 357–377, 412–432, 443–463, 489–511, 527–547, 602–622, 645–665, and 678–698; these read MWVLGIGACIVLSFINQFFWY, MPLSITGISAQIAVVPLGHLM, VLITIFANSGAGSVYATHILS, FLPAFLVMITTQILGFGWAGL, FFLIVLVASFAYYIFPGYLFT, LGIGSIGFDWVTISAYLGSPL, VAIGFVLVMYIVTPVCYWLNI, FFAVTYGLGFATLSATIVHVL, VPLWWFLVILLLNIALIMFIS, WWGVLLACAIAISFTPLIGVI, PVANMCFKVYGYISMTQALTFIS, FMAQVAGTLVAVVVYTGTAWW, WFFLVGAIAPLLVWLATKMFP, ATAVNFTSWLIVAFIFGHFIF, and VLSGGLDAGSAFMTILLFLAL.

Belongs to the oligopeptide OPT transporter (TC 2.A.67.1) family. As to expression, expressed in flowers and roots, and at a low level in leaves and stems. Detected in the cambial zone of the vascular bundles and in the region of lateral root initiation. Low expression in the vascular network of the petals and high in the stamen filaments and the gynoecium.

Its subcellular location is the membrane. Involved in the translocation of tetra- and pentapeptides across the cellular membrane in an energy-dependent manner. Also involved in transport of glutathione derivatives and metal complexes, and may be involved in stress resistance. The polypeptide is Oligopeptide transporter 6 (OPT6) (Arabidopsis thaliana (Mouse-ear cress)).